A 288-amino-acid polypeptide reads, in one-letter code: Solute carrier family 25 member 45 (288 aa).

3 Solcar repeats span residues 1–83 (MPVE…TLLV), 97–191 (PSYM…LCRQ), and 199–286 (PSSA…LLRW). Helical transmembrane passes span 6–26 (FVAGWISGALGLVLGHPFDTV), 63–83 (IASIAVVNSVLFGVYSNTLLV), 100–120 (MHIFLAGCTGGFLQAYCLAPF), 166–186 (GAWALTLRDTPTVGIYFITYE), 202–222 (ATVLVAGGFAGIASWVAATPL), and 266–286 (SARAFPVNAVTFLSYEYLLRW).

Belongs to the mitochondrial carrier (TC 2.A.29) family.

Its subcellular location is the mitochondrion inner membrane. The polypeptide is Solute carrier family 25 member 45 (SLC25A45) (Homo sapiens (Human)).